The sequence spans 940 residues: Valine--tRNA ligase (940 aa).

Residues 47-57 (PNVTGVLHMGH) carry the 'HIGH' region motif. The 'KMSKS' region motif lies at 564–568 (KLSKS). Residue K567 coordinates ATP. Residues 873–905 (EEHLLKEKGRLEKERVRLERAVENLERLLGDES) adopt a coiled-coil conformation.

The protein belongs to the class-I aminoacyl-tRNA synthetase family. ValS type 1 subfamily. Monomer.

The protein localises to the cytoplasm. The enzyme catalyses tRNA(Val) + L-valine + ATP = L-valyl-tRNA(Val) + AMP + diphosphate. Functionally, catalyzes the attachment of valine to tRNA(Val). As ValRS can inadvertently accommodate and process structurally similar amino acids such as threonine, to avoid such errors, it has a 'posttransfer' editing activity that hydrolyzes mischarged Thr-tRNA(Val) in a tRNA-dependent manner. The polypeptide is Valine--tRNA ligase (Chlamydia pneumoniae (Chlamydophila pneumoniae)).